The chain runs to 376 residues: Heat stress transcription factor A-2a (376 aa).

Residues 137-168 (LKTIKRRRPPPSSPPSSSSSSSSSQHQQQPAA) form a disordered region. Positions 151-160 (PSSSSSSSSS) are enriched in low complexity. The stretch at 182–229 (VNRLQRDKSVLIAEVVKLRQEQQTTRAQMQAMEERISAAEQKQQQMTV) forms a coiled coil. The interval 185–235 (LQRDKSVLIAEVVKLRQEQQTTRAQMQAMEERISAAEQKQQQMTVFLARAM) is hydrophobic repeat HR-A/B. Positions 265–269 (KKRRR) match the Nuclear localization signal motif. Disordered regions lie at residues 296 to 319 (VAEP…DTES) and 332 to 362 (KQRE…DDDD). The segment covering 307-316 (GDGGGGGGGD) has biased composition (gly residues). The AHA motif lies at 318–325 (ESFWMQLL). Acidic residues predominate over residues 352–362 (VDNDEEDDDDD). A Nuclear export signal motif is present at residues 366 to 373 (LVQSIYHL).

The protein belongs to the HSF family. Class A subfamily. As to quaternary structure, homotrimer. In terms of processing, exhibits temperature-dependent phosphorylation.

It localises to the cytoplasm. The protein localises to the nucleus. Its function is as follows. Transcriptional regulator that specifically binds DNA of heat shock promoter elements (HSE). The polypeptide is Heat stress transcription factor A-2a (HSFA2A) (Oryza sativa subsp. japonica (Rice)).